The sequence spans 477 residues: P3 protein (477 aa).

Residues 1-21 form a disordered region; sequence MVLMQDKGSSQQWPGLGGEGG. The next 8 helical transmembrane spans lie at 225-245, 253-273, 281-301, 320-340, 361-381, 383-403, 417-437, and 450-470; these read PMLL…FLMA, ALAL…SYLF, VTLA…FLPL, ISKI…GVLI, VLLL…LAGI, LPIV…GYCL, VSIE…QLSL, and FIVA…HFIY.

This sequence belongs to the bile acid:sodium symporter (BASS) (TC 2.A.28) family.

The protein resides in the membrane. In terms of biological role, the ubiquitous expression and the conservation of the sequence in distant animal species suggest that the gene codes for a protein with housekeeping functions. This Homo sapiens (Human) protein is P3 protein (SLC10A3).